Here is a 335-residue protein sequence, read N- to C-terminus: Aliphatic sulfonates import ATP-binding protein SsuB (335 aa).

Residues 48–71 (PFASGGAFGRAPRDDDDDRRGAGD) are disordered. Residues 74–293 (VRLTRVSKRY…ARASAAFAEL (220 aa)) enclose the ABC transporter domain. 106–113 (GRSGCGKS) is an ATP binding site.

It belongs to the ABC transporter superfamily. Aliphatic sulfonates importer (TC 3.A.1.17.2) family. As to quaternary structure, the complex is composed of two ATP-binding proteins (SsuB), two transmembrane proteins (SsuC) and a solute-binding protein (SsuA).

It is found in the cell inner membrane. The catalysed reaction is ATP + H2O + aliphatic sulfonate-[sulfonate-binding protein]Side 1 = ADP + phosphate + aliphatic sulfonateSide 2 + [sulfonate-binding protein]Side 1.. Its function is as follows. Part of the ABC transporter complex SsuABC involved in aliphatic sulfonates import. Responsible for energy coupling to the transport system. This is Aliphatic sulfonates import ATP-binding protein SsuB from Burkholderia thailandensis (strain ATCC 700388 / DSM 13276 / CCUG 48851 / CIP 106301 / E264).